Here is a 151-residue protein sequence, read N- to C-terminus: 3-hydroxyacyl-[acyl-carrier-protein] dehydratase FabZ (151 aa).

Residue H54 is part of the active site.

Belongs to the thioester dehydratase family. FabZ subfamily. As to quaternary structure, oligomer. In terms of processing, the N-terminus is blocked.

The protein localises to the cytoplasm. The catalysed reaction is a (3R)-hydroxyacyl-[ACP] = a (2E)-enoyl-[ACP] + H2O. Functionally, involved in unsaturated fatty acids biosynthesis. Catalyzes the dehydration of short chain beta-hydroxyacyl-ACPs and long chain saturated and unsaturated beta-hydroxyacyl-ACPs. The protein is 3-hydroxyacyl-[acyl-carrier-protein] dehydratase FabZ of Escherichia coli (strain SE11).